A 279-amino-acid polypeptide reads, in one-letter code: Phycobilisome rod-core linker polypeptide CpcG1 (279 aa).

One can recognise a PBS-linker domain in the interval 11–189; it reads TTQNQRVEGY…YWRNRLLEQF (179 aa).

This sequence belongs to the phycobilisome linker protein family. In terms of assembly, the phycobilisome is a hemidiscoidal structure that is composed of two distinct substructures: a core complex and a number of rods radiating from the core.

The protein resides in the cellular thylakoid membrane. Its function is as follows. Rod-core linker protein required for attachment of phycocyanin to allophycocyanin in cores of phycobilisomes. Linker polypeptides determine the state of aggregation and the location of the disk-shaped phycobiliprotein units within the phycobilisome and modulate their spectroscopic properties in order to mediate a directed and optimal energy transfer. The protein is Phycobilisome rod-core linker polypeptide CpcG1 (cpcG1) of Mastigocladus laminosus (Fischerella sp.).